The sequence spans 332 residues: Fructose-1,6-bisphosphatase class 1 (332 aa).

Mg(2+)-binding residues include Glu89, Asp110, Leu112, and Asp113. Substrate-binding positions include 113-116 (DGSS), Asn206, Tyr239, 257-259 (YLY), and Lys269. Residue Glu275 coordinates Mg(2+).

Belongs to the FBPase class 1 family. Homotetramer. The cofactor is Mg(2+).

It localises to the cytoplasm. The enzyme catalyses beta-D-fructose 1,6-bisphosphate + H2O = beta-D-fructose 6-phosphate + phosphate. The protein operates within carbohydrate biosynthesis; gluconeogenesis. This chain is Fructose-1,6-bisphosphatase class 1, found in Shigella sonnei (strain Ss046).